The chain runs to 309 residues: MAATLRELRGRIRSAGSIKKITKAQEMIATSRIAKAQARVEAARPYDREITNMLTELATASALDHPLLVQRENPRRAGVLVVSSDRGLAGAYNANVFRRSEELFSLLREEGKEPVLYVVGRKALSYYSFRNWDVTESWSGFSERPEYEHAQEIGETLVKAFMAGVDDEGDDAGADGILGLDELHIVFTEFRSMLSQSAIARRIAPMVVEYSEEDTNEPHTLFSFEPSAETLFDALLPRYVSTRIFAAMLEAAASESASRRRAMKSASDNADDLIKDLTLMANRERQSQITQEISEIVGGANALADAAKK.

The protein belongs to the ATPase gamma chain family. As to quaternary structure, F-type ATPases have 2 components, CF(1) - the catalytic core - and CF(0) - the membrane proton channel. CF(1) has five subunits: alpha(3), beta(3), gamma(1), delta(1), epsilon(1). CF(0) has three main subunits: a, b and c.

The protein localises to the cell membrane. Functionally, produces ATP from ADP in the presence of a proton gradient across the membrane. The gamma chain is believed to be important in regulating ATPase activity and the flow of protons through the CF(0) complex. This is ATP synthase gamma chain from Mycobacterium sp. (strain JLS).